Reading from the N-terminus, the 128-residue chain is uncharacterized protein (128 aa).

This is an uncharacterized protein from Mycoplasma pneumoniae (strain ATCC 29342 / M129 / Subtype 1) (Mycoplasmoides pneumoniae).